The chain runs to 496 residues: MERQKSMEKGLLRKSLSIRERKFPNEDAFLESGLSRKSPREVKKPQNDDGECRVTASVFLSTFVAVSGSFCTGCGVGFSSGAQAGITKDLSLSVAEYSMFGSILTLGGLIGAVFSGKVADVLGRKRTMLFCEFFCITGWLCVALAQNAMWLDCGRLLLGIGVGIFSYVIPVYIAEIAPKHVRGSFVFANQLMQNCGISLFFIIGNFIPWRLLTVVGLVPCVFHVFCLFFIPESPRWLAKLGRDKECRSSLQRLRGSDVDISREANTIRDTIDMTENGGETKMSELFQRRYAYPLIIGVGLMFLQQLCGSSGVTYYASSLFNKGGFPSAIGTSVIATIMVPKAMLATVLVDKMGRRTLLMASCSAMGLSALLLSVSYGFQSFGILPELTPIFTCIGVLGHIVSFAMGMGGLPWIIMAEIFPMNVKVSAGTLVTVTNWLFGWIITYTFNFMLEWNASGMFLIFSMVSASSIVFIYFLVPETKGRSLEEIQALLNNSVQ.

The next 6 helical transmembrane spans lie at Val58–Phe78, Val94–Phe114, Met128–Ala148, Leu156–Ile176, Gly183–Ile203, and Leu211–Pro231. Position 256 is a phosphoserine (Ser256). Helical transmembrane passes span Tyr292–Val312, Ile329–Val349, Ala364–Leu384, Ile394–Ile414, Leu430–Leu450, and Gly456–Val476.

It belongs to the major facilitator superfamily. Sugar transporter (TC 2.A.1.1) family. As to expression, expressed in both shoots and roots. In roots, expressed in epidermal cells and especially strongly in cortex cells. In flowers, expressed in sepals.

The protein localises to the membrane. Functionally, sugar transporter. The chain is Sugar transporter ERD6 (ERD6) from Arabidopsis thaliana (Mouse-ear cress).